A 1188-amino-acid polypeptide reads, in one-letter code: Probable phosphoenolpyruvate synthase (1188 aa).

The DOD-type homing endonuclease domain maps to 536–670; it reads LGGAVLSDGH…LIVGLYRLGI (135 aa). H824 (tele-phosphohistidine intermediate) is an active-site residue. Residues R917, R964, E1061, G1083, T1084, N1085, and D1086 each coordinate substrate. Mg(2+) is bound at residue E1061. A Mg(2+)-binding site is contributed by D1086. C1133 functions as the Proton donor in the catalytic mechanism.

The protein belongs to the PEP-utilizing enzyme family. Requires Mg(2+) as cofactor. In terms of processing, this protein undergoes a protein self splicing that involves a post-translational excision of the intervening region (intein) followed by peptide ligation.

It carries out the reaction pyruvate + ATP + H2O = phosphoenolpyruvate + AMP + phosphate + 2 H(+). The protein operates within carbohydrate biosynthesis; gluconeogenesis. Its function is as follows. Catalyzes the phosphorylation of pyruvate to phosphoenolpyruvate. This Methanocaldococcus jannaschii (strain ATCC 43067 / DSM 2661 / JAL-1 / JCM 10045 / NBRC 100440) (Methanococcus jannaschii) protein is Probable phosphoenolpyruvate synthase (ppsA).